Consider the following 227-residue polypeptide: 2-C-methyl-D-erythritol 4-phosphate cytidylyltransferase (227 aa).

Belongs to the IspD/TarI cytidylyltransferase family. IspD subfamily.

The catalysed reaction is 2-C-methyl-D-erythritol 4-phosphate + CTP + H(+) = 4-CDP-2-C-methyl-D-erythritol + diphosphate. The protein operates within isoprenoid biosynthesis; isopentenyl diphosphate biosynthesis via DXP pathway; isopentenyl diphosphate from 1-deoxy-D-xylulose 5-phosphate: step 2/6. Functionally, catalyzes the formation of 4-diphosphocytidyl-2-C-methyl-D-erythritol from CTP and 2-C-methyl-D-erythritol 4-phosphate (MEP). The protein is 2-C-methyl-D-erythritol 4-phosphate cytidylyltransferase of Lachnospira eligens (strain ATCC 27750 / DSM 3376 / VPI C15-48 / C15-B4) (Eubacterium eligens).